Reading from the N-terminus, the 357-residue chain is Glutamine synthetase root isozyme A (357 aa).

The 81-residue stretch at 19 to 99 (IIAEYIWVGG…VICDVYTPAG (81 aa)) folds into the GS beta-grasp domain. The GS catalytic domain maps to 106-357 (KRYNAAKIFS…AETTILWKKP (252 aa)).

It belongs to the glutamine synthetase family. As to quaternary structure, homooctamer.

It is found in the cytoplasm. The enzyme catalyses L-glutamate + NH4(+) + ATP = L-glutamine + ADP + phosphate + H(+). In Pisum sativum (Garden pea), this protein is Glutamine synthetase root isozyme A (GS3A).